The following is a 205-amino-acid chain: MNRLLLLLALVLSGVAAESIRETETMDPTSMLEYESSGSFTDEVFVDEDDDDDYEDGVDYEIDSESDNDEDYSGSGDDDFDDEDNVEDEDEEETTTLGNQIPEHDFDETKTGRKFDTFNENNEIDNDIRHPAKPKTLEPSNEIPMASIGSSGFFQRTEVIVAIIAGTLVGLVVAVSFIVFLVIRRNQNGDLVKKPIYKKTSTMEV.

The signal sequence occupies residues 1 to 17 (MNRLLLLLALVLSGVAA). Topologically, residues 18 to 162 (ESIRETETMD…FFQRTEVIVA (145 aa)) are extracellular. The tract at residues 26-113 (MDPTSMLEYE…HDFDETKTGR (88 aa)) is disordered. Serine 37, serine 73, and serine 75 each carry an O-linked (Xyl...) (glycosaminoglycan) serine glycan. Residues 44–94 (VFVDEDDDDDYEDGVDYEIDSESDNDEDYSGSGDDDFDDEDNVEDEDEEET) show a composition bias toward acidic residues. Residues 102–113 (PEHDFDETKTGR) are compositionally biased toward basic and acidic residues. Residues 163 to 183 (IIAGTLVGLVVAVSFIVFLVI) form a helical membrane-spanning segment. The Cytoplasmic portion of the chain corresponds to 184–205 (RRNQNGDLVKKPIYKKTSTMEV).

The protein belongs to the syndecan proteoglycan family. As to quaternary structure, interacts with the Wnt receptor fzd7 and its signal transducer dvl2/dsh. In terms of processing, O-glycosylated; contains both chondroitin sulfate and heparan sulfate. Ser-37, Ser-73 and Ser-75 can all be modified by either chondroitin sulfate or heparan sulfate, and the protein exists in forms that contain only chondroitin sulfate, only heparan sulfate and both chondroitin sulfate and heparan sulfate. As to expression, expressed in the animal hemisphere from the 4-cell to the blastula stage. During gastrulation, expressed in the involuting dorsal mesoderm and ectoderm. After involution, localized mainly to the anterior neuroectoderm. At later stages, expressed in the brain, branchial arches, pronephros, tailbud, and at low levels in the somites.

Its subcellular location is the membrane. Functionally, cell surface proteoglycan. Regulates non-canonical Wnt signaling, being necessary and sufficient for fibronectrin-mediated translocation of dvl2/dsh to the plasma membrane. Required for proper convergent extension movements during gastrulation, which shape the neural plate, and for subsequent neural tube closure. This chain is Syndecan 4-B (sdc4-b), found in Xenopus laevis (African clawed frog).